We begin with the raw amino-acid sequence, 467 residues long: Dynactin subunit 4 (467 aa).

Ala2 carries the N-acetylalanine modification. The stretch at 152–172 forms a coiled coil; sequence QQLAQKEKVERDRKKLARRRN. Ser203 is subject to Phosphoserine. A Glycyl lysine isopeptide (Lys-Gly) (interchain with G-Cter in SUMO2) cross-link involves residue Lys222. Phosphothreonine is present on Thr414.

This sequence belongs to the dynactin subunit 4 family. Subunit of dynactin, a multiprotein complex part of a tripartite complex with dynein and a adapter, such as BICDL1, BICD2 or HOOK3. The dynactin complex is built around ACTR1A/ACTB filament and consists of an actin-related filament composed of a shoulder domain, a pointed end and a barbed end. Its length is defined by its flexible shoulder domain. The soulder is composed of 2 DCTN1 subunits, 4 DCTN2 and 2 DCTN3. The 4 DCNT2 (via N-terminus) bind the ACTR1A filament and act as molecular rulers to determine the length. The pointed end is important for binding dynein-dynactin cargo adapters. Consists of 4 subunits: ACTR10, DCNT4, DCTN5 and DCTN6. The barbed end is composed of a CAPZA1:CAPZB heterodimers, which binds ACTR1A/ACTB filament and dynactin and stabilizes dynactin. Interacts with ATP7B, but not ATP7A, in a copper-dependent manner. Interacts with ANK2; this interaction is required for localization at costameres. Interacts with N4BP2L1.

The protein resides in the cytoplasm. The protein localises to the cytoskeleton. It is found in the microtubule organizing center. Its subcellular location is the centrosome. It localises to the stress fiber. The protein resides in the cell cortex. The protein localises to the myofibril. It is found in the sarcomere. Its function is as follows. Part of the dynactin complex that activates the molecular motor dynein for ultra-processive transport along microtubules. The polypeptide is Dynactin subunit 4 (Dctn4) (Mus musculus (Mouse)).